The following is a 428-amino-acid chain: Elongation factor 1-alpha (428 aa).

A tr-type G domain is found at 5-217 (KPHVNIVFIG…DQIPEPEKPV (213 aa)). Positions 14 to 21 (GHVDHGKS) are G1. 14 to 21 (GHVDHGKS) contributes to the GTP binding site. Serine 21 provides a ligand contact to Mg(2+). The G2 stretch occupies residues 68-72 (GITID). Residues 89 to 92 (DAPG) are G3. Residues 89–93 (DAPGH) and 144–147 (NKMD) each bind GTP. Positions 144 to 147 (NKMD) are G4. Residues 181-183 (SAW) are G5.

This sequence belongs to the TRAFAC class translation factor GTPase superfamily. Classic translation factor GTPase family. EF-Tu/EF-1A subfamily.

The protein localises to the cytoplasm. It catalyses the reaction GTP + H2O = GDP + phosphate + H(+). Its function is as follows. GTP hydrolase that promotes the GTP-dependent binding of aminoacyl-tRNA to the A-site of ribosomes during protein biosynthesis. The protein is Elongation factor 1-alpha of Pyrococcus abyssi (strain GE5 / Orsay).